Here is a 555-residue protein sequence, read N- to C-terminus: Formate--tetrahydrofolate ligase (555 aa).

64-71 (TPAGEGKT) lines the ATP pocket.

It belongs to the formate--tetrahydrofolate ligase family.

It catalyses the reaction (6S)-5,6,7,8-tetrahydrofolate + formate + ATP = (6R)-10-formyltetrahydrofolate + ADP + phosphate. It functions in the pathway one-carbon metabolism; tetrahydrofolate interconversion. The chain is Formate--tetrahydrofolate ligase from Allorhizobium ampelinum (strain ATCC BAA-846 / DSM 112012 / S4) (Agrobacterium vitis (strain S4)).